A 592-amino-acid chain; its full sequence is Monocopper oxidase-like protein SKS2 (592 aa).

The N-terminal stretch at 1-23 (MAATDFFFAFVFSFALIFGFSFA) is a signal peptide. N-linked (GlcNAc...) asparagine glycosylation is found at Asn61, Asn110, Asn172, Asn203, Asn259, Asn280, Asn295, Asn344, Asn364, Asn433, and Asn447. Residue His455 coordinates Cu cation. Residues Asn476 and Asn536 are each glycosylated (N-linked (GlcNAc...) asparagine). Residue Ser564 is the site of GPI-anchor amidated serine attachment. A propeptide spans 565-592 (ATKSMTNGQLILIFSMMMVLLSSFSSFC) (removed in mature form).

Belongs to the multicopper oxidase family. The cofactor is Cu cation.

The protein localises to the cell membrane. This Arabidopsis thaliana (Mouse-ear cress) protein is Monocopper oxidase-like protein SKS2 (SKS2).